Consider the following 128-residue polypeptide: Large ribosomal subunit protein bL12 (128 aa).

The tract at residues 97-128 is disordered; it reads GAPSTLKEGVSKEDAEEAKKQLTEAGATVEVK. Basic and acidic residues predominate over residues 105 to 118; sequence GVSKEDAEEAKKQL.

This sequence belongs to the bacterial ribosomal protein bL12 family. Homodimer. Part of the ribosomal stalk of the 50S ribosomal subunit. Forms a multimeric L10(L12)X complex, where L10 forms an elongated spine to which 2 to 4 L12 dimers bind in a sequential fashion. Binds GTP-bound translation factors.

In terms of biological role, forms part of the ribosomal stalk which helps the ribosome interact with GTP-bound translation factors. Is thus essential for accurate translation. This is Large ribosomal subunit protein bL12 from Lawsonia intracellularis (strain PHE/MN1-00).